A 242-amino-acid chain; its full sequence is Succinyl-CoA:3-ketoacid coenzyme A transferase subunit A (242 aa).

A CoA-binding site is contributed by 33-39; sequence GGFGLCG.

It belongs to the 3-oxoacid CoA-transferase subunit A family. Heterodimer of a subunit A and a subunit B.

The enzyme catalyses a 3-oxo acid + succinyl-CoA = a 3-oxoacyl-CoA + succinate. Its pathway is bacterial outer membrane biogenesis; lipopolysaccharide biosynthesis. The chain is Succinyl-CoA:3-ketoacid coenzyme A transferase subunit A (lpsI) from Xanthomonas campestris pv. campestris (strain ATCC 33913 / DSM 3586 / NCPPB 528 / LMG 568 / P 25).